We begin with the raw amino-acid sequence, 1053 residues long: MAFLKLRDQPSLVQAIFNGDPDEVRALIFKKEDVNFQDNEKRTPLHAAAYLGDAEIIELLILSGARVNAKDSKWLTPLHRAVASCSEEAVQILLKHSADVNARDKNWQTPLHIAAANKAVKCAESLVPLLSNVNVSDRAGRTALHHAAFSGHGEMVKLLLSRGANINAFDKKDRRAIHWAAYMGHIEVVKLLVSHGAEVTCKDKKSYTPLHAAASSGMISVVKYLLDLGVDMNEPNAYGNTPLHVACYNGQDVVVNELIDCGANVNQKNEKGFTPLHFAAASTHGALCLELLVGNGADVNMKSKDGKTPLHMTALHGRFSRSQTIIQSGAVIDCEDKNGNTPLHIAARYGHELLINTLITSGADTAKRGIHGMFPLHLAALSGFSDCCRKLLSSGFDIDTPDDFGRTCLHAAAAGGNLECLNLLLNTGADFNKKDKFGRSPLHYAAANCNYQCLFALVGSGASVNDLDERGCTPLHYAATSDTDGKCLEYLLRNDANPGIRDKQGYNAVHYSAAYGHRLCLQLIASETPLDVLMETSGTDMLSDSDNRATISPLHLAAYHGHHQALEVLVQSLLDLDVRNSSGRTPLDLAAFKGHVECVDVLINQGASILVKDYVLKRTPIHAAATNGHSECLRLLIGNAEPQNAVDIQDGNGQTPLMLSVLNGHTDCVYSLLNKGANVDAKDKWGRTALHRGAVTGHEECVDALLQHGAKCLLRDSRGRTPIHLSAACGHIGVLGALLQSATSVDANPAVVDNHGYTALHWACYNGHETCVELLLEQDVFQKIDGNAFSPLHCAVINDNEGAAEMLIDSLGASIVNATDSKGRTPLHAAAFTDHVECLQLLLSQNAQVNSADSTGKTPLMMAAENGQTNTVEMLVSSASADLTLQDKSKNTALHLACGKGHETSALLILEKITDRNLINATNAALQTPLHVAARNGLTMVVQELLGKGASVLAVDENGYTPALACAPNKDVADCLALILATMMPVSSSSPLTSLTFNAINRYTNTSKTVSFEALPIMRNEASSYCSFNNIGGEQEYLYTDVDELNDSDSETY.

ANK repeat units lie at residues 40 to 69 (EKRT…RVNA), 73 to 102 (KWLT…DVNA), 106 to 135 (NWQT…NVNV), 139 to 168 (AGRT…NINA), 172 to 201 (KDRR…EVTC), 205 to 234 (KSYT…DMNE), 238 to 267 (YGNT…NVNQ), 271 to 301 (KGFT…DVNM), 305 to 334 (DGKT…VIDC), 338 to 367 (NGNT…DTAK), 371 to 400 (HGMF…DIDT), 404 to 433 (FGRT…DFNK), 437 to 466 (FGRS…SVND), 470 to 500 (RGCT…NPGI), 504 to 534 (QGYN…DVLM), 549 to 578 (ATIS…DLDV), 582 to 611 (SGRT…SILV), 616 to 645 (LKRT…PQNA), 652 to 681 (NGQT…NVDA), 685 to 714 (WGRT…KCLL), 718 to 747 (RGRT…SVDA), 755 to 786 (HGYT…KIDG), 788 to 817 (AFSP…SIVN), 822 to 851 (KGRT…QVNS), 855 to 885 (TGKT…DLTL), 889 to 918 (SKNT…DRNL), and 925 to 954 (ALQT…SVLA). Phosphoserine occurs at positions 1007 and 1011.

Protein phosphatase 6 (PP6) holoenzyme is proposed to be a heterotrimeric complex formed by the catalytic subunit, a SAPS domain-containing subunit (PP6R) and an ankyrin repeat-domain containing regulatory subunit (ARS). Interacts with PPP1C and HNRPK. Interacts with PPP6C, PPP6R1 and PPP6R3. Post-translationally, ubiquitinated by the ECS(RAB40C) complex leading to its degradation and decreased PP6 activity. Widely expressed (at protein level).

It localises to the nucleus. Its subcellular location is the nucleoplasm. It is found in the cytoplasm. The protein localises to the cytosol. The protein resides in the cell projection. It localises to the lamellipodium. In terms of biological role, putative regulatory subunit of protein phosphatase 6 (PP6) that may be involved in the recognition of phosphoprotein substrates. Involved in the PP6-mediated dephosphorylation of NFKBIE opposing its degradation in response to TNF-alpha. Selectively inhibits the phosphatase activity of PPP1C. Targets PPP1C to modulate HNRPK phosphorylation. Involved in the PP6-mediated dephosphorylation of MOB1 and induced focal adhesion assembly during cell migration. In Mus musculus (Mouse), this protein is Serine/threonine-protein phosphatase 6 regulatory ankyrin repeat subunit A (Ankrd28).